The following is a 300-amino-acid chain: Nucleotide-binding protein TM1040_2438 (300 aa).

24 to 31 (GPSGAGRT) contacts ATP. Residue 71-74 (DPRN) coordinates GTP.

Belongs to the RapZ-like family.

In terms of biological role, displays ATPase and GTPase activities. The polypeptide is Nucleotide-binding protein TM1040_2438 (Ruegeria sp. (strain TM1040) (Silicibacter sp.)).